A 283-amino-acid chain; its full sequence is NAD kinase (283 aa).

Asp66 (proton acceptor) is an active-site residue. Residues 66 to 67, Arg71, 137 to 138, His165, Asp167, and 178 to 183 contribute to the NAD(+) site; these read DG, ND, and TGYSMS.

It belongs to the NAD kinase family. It depends on a divalent metal cation as a cofactor.

The protein localises to the cytoplasm. The enzyme catalyses NAD(+) + ATP = ADP + NADP(+) + H(+). Involved in the regulation of the intracellular balance of NAD and NADP, and is a key enzyme in the biosynthesis of NADP. Catalyzes specifically the phosphorylation on 2'-hydroxyl of the adenosine moiety of NAD to yield NADP. In Agathobacter rectalis (strain ATCC 33656 / DSM 3377 / JCM 17463 / KCTC 5835 / VPI 0990) (Eubacterium rectale), this protein is NAD kinase.